A 274-amino-acid polypeptide reads, in one-letter code: Diaminopimelate epimerase (274 aa).

3 residues coordinate substrate: N11, Q44, and N64. C73 acts as the Proton donor in catalysis. Substrate is bound by residues 74-75 (GN), N157, N190, and 208-209 (ER). C217 acts as the Proton acceptor in catalysis. 218–219 (GS) provides a ligand contact to substrate.

This sequence belongs to the diaminopimelate epimerase family. In terms of assembly, homodimer.

Its subcellular location is the cytoplasm. The catalysed reaction is (2S,6S)-2,6-diaminopimelate = meso-2,6-diaminopimelate. It functions in the pathway amino-acid biosynthesis; L-lysine biosynthesis via DAP pathway; DL-2,6-diaminopimelate from LL-2,6-diaminopimelate: step 1/1. Its function is as follows. Catalyzes the stereoinversion of LL-2,6-diaminopimelate (L,L-DAP) to meso-diaminopimelate (meso-DAP), a precursor of L-lysine and an essential component of the bacterial peptidoglycan. This chain is Diaminopimelate epimerase, found in Escherichia coli O127:H6 (strain E2348/69 / EPEC).